The chain runs to 23 residues: Aurein-4.1 (23 aa).

Belongs to the frog skin active peptide (FSAP) family. Aurein subfamily. Expressed by the skin dorsal glands.

The protein localises to the secreted. Has no antimicrobial or anticancer activity. In Ranoidea aurea (Green and golden bell frog), this protein is Aurein-4.1.